The following is a 221-amino-acid chain: Protein OPG164 (221 aa).

A topological domain (extracellular) is located at residue Met-1. The helical transmembrane segment at Met-2 to Leu-22 threads the bilayer. The Cytoplasmic segment spans residues Tyr-23–Val-221. Residues Tyr-112 and Tyr-132 each carry the phosphotyrosine; by host modification. Short sequence motifs (NPF-motif) lie at residues Asn-161 to Phe-163, Asn-176 to Phe-178, and Asn-190 to Phe-192.

This sequence belongs to the orthopoxvirus OPG164 protein family. In terms of assembly, interacts with host NCK. Interacts with protein OPG161 (via C-terminus). Interacts with protein OPG056. Interacts (via C-terminus) with host kinesin light chain/KLC1. Interacts with host intersectin-1/ITSN1 and EPS15. Phosphorylated on Tyr-112 and Tyr-132. Phosphorylations activate the host ARP2-ARP3 complex and lead to actin nucleation.

It localises to the host cell membrane. Functionally, involved in the intracellular transport and egress of virions to the host cell surface with help of protein OPG056. Also participates in the formation of actin tails at the plasma membrane to allow efficient actin-based motility and thus cell to cell transmission of viral particles. Recruits host intersectin-1/ITSN1 and activates host CDC42 to drive ARP2/3-mediated actin polymerization. This is Protein OPG164 (OPG164) from Homo sapiens (Human).